Consider the following 415-residue polypeptide: Tyrosine-protein phosphatase non-receptor type 2 (415 aa).

Positions 5-275 (IEREFEELDT…RFSYMAIIEG (271 aa)) constitute a Tyrosine-protein phosphatase domain. Tyrosine 22 is subject to Phosphotyrosine. Phosphoserine is present on serine 52. Position 68 is a phosphotyrosine (tyrosine 68). Substrate contacts are provided by residues aspartate 182, 216–222 (CSAGIGR), and glutamine 260. The active-site Phosphocysteine intermediate is cysteine 216. Cysteine 216 carries the post-translational modification S-nitrosocysteine. A phosphoserine mark is found at serine 293, serine 298, and serine 304. The segment at 346-415 (ESALRKRIRE…WTLFFQQNAL (70 aa)) is endoplasmic reticulum location. The segment at 376 to 415 (ERKRKRWLYWQPILTKMGFMSVILVGAFVGWTLFFQQNAL) is mediates interaction with STX17.

Belongs to the protein-tyrosine phosphatase family. Non-receptor class 1 subfamily. Interacts with RMDN3. Isoform 1 interacts with TMED9. Isoform 1 interacts with STX17; dephosphorylates STX17. Interacts with ITGA1 (via cytoplasmic domain); activates the phosphatase activity towards EGFR. Interacts with TRAF2; probably involved in tumor necrosis factor-mediated signaling. Interacts with MET. Interacts with FAM220A and STAT3; interaction with FAM220A promotes interaction of PTPN2 with transcriptional activator STAT3, leading to dephosphorylation of STAT3 by PTPN2 and negative regulation of STAT3 transcriptional activator activity. Specifically phosphorylated in a cell cycle-dependent manner by cyclin-dependent kinases CDK1 and CDK2. Probably activated through phosphorylation by PKR. In terms of tissue distribution, ubiquitously expressed. Isoform 2 is probably the major isoform. Isoform 1 is expressed in T-cells and in placenta.

It localises to the endoplasmic reticulum. It is found in the endoplasmic reticulum-Golgi intermediate compartment. The protein resides in the nucleus. Its subcellular location is the cytoplasm. The protein localises to the cell membrane. The catalysed reaction is O-phospho-L-tyrosyl-[protein] + H2O = L-tyrosyl-[protein] + phosphate. Functionally, non-receptor type tyrosine-specific phosphatase that dephosphorylates receptor protein tyrosine kinases including INSR, EGFR, CSF1R, PDGFR. Also dephosphorylates non-receptor protein tyrosine kinases like JAK1, JAK2, JAK3, Src family kinases, STAT1, STAT3 and STAT6 either in the nucleus or the cytoplasm. Negatively regulates numerous signaling pathways and biological processes like hematopoiesis, inflammatory response, cell proliferation and differentiation, and glucose homeostasis. Plays a multifaceted and important role in the development of the immune system. Functions in T-cell receptor signaling through dephosphorylation of FYN and LCK to control T-cells differentiation and activation. Dephosphorylates CSF1R, negatively regulating its downstream signaling and macrophage differentiation. Negatively regulates cytokine (IL2/interleukin-2 and interferon)-mediated signaling through dephosphorylation of the cytoplasmic kinases JAK1, JAK3 and their substrate STAT1, that propagate signaling downstream of the cytokine receptors. Also regulates the IL6/interleukin-6 and IL4/interleukin-4 cytokine signaling through dephosphorylation of STAT3 and STAT6 respectively. In addition to the immune system, it is involved in anchorage-dependent, negative regulation of EGF-stimulated cell growth. Activated by the integrin ITGA1/ITGB1, it dephosphorylates EGFR and negatively regulates EGF signaling. Dephosphorylates PDGFRB and negatively regulates platelet-derived growth factor receptor-beta signaling pathway and therefore cell proliferation. Negatively regulates tumor necrosis factor-mediated signaling downstream via MAPK through SRC dephosphorylation. May also regulate the hepatocyte growth factor receptor signaling pathway through dephosphorylation of the hepatocyte growth factor receptor MET. Also plays an important role in glucose homeostasis. For instance, negatively regulates the insulin receptor signaling pathway through the dephosphorylation of INSR and control gluconeogenesis and liver glucose production through negative regulation of the IL6 signaling pathways. May also bind DNA. The sequence is that of Tyrosine-protein phosphatase non-receptor type 2 (PTPN2) from Homo sapiens (Human).